The following is a 295-amino-acid chain: Succinate dehydrogenase assembly factor 2, mitochondrial (295 aa).

3 disordered regions span residues 35 to 90, 208 to 227, and 269 to 295; these read AKDN…PELL, PEEG…RTGA, and TGFH…VFDS. Over residues 45–75 the composition is skewed to polar residues; it reads STPSTAPEYRQNQTSKPPNQFMPNSTSTMTN.

This sequence belongs to the SDHAF2 family. In terms of assembly, interacts with the flavoprotein subunit within the SDH catalytic dimer.

Its subcellular location is the mitochondrion matrix. Functionally, plays an essential role in the assembly of succinate dehydrogenase (SDH), an enzyme complex (also referred to as respiratory complex II) that is a component of both the tricarboxylic acid (TCA) cycle and the mitochondrial electron transport chain, and which couples the oxidation of succinate to fumarate with the reduction of ubiquinone (coenzyme Q) to ubiquinol. Required for flavinylation (covalent attachment of FAD) of the flavoprotein subunit of the SDH catalytic dimer. In Aspergillus terreus (strain NIH 2624 / FGSC A1156), this protein is Succinate dehydrogenase assembly factor 2, mitochondrial.